The sequence spans 146 residues: Hemoglobin subunit beta-2 (146 aa).

Positions 2–146 constitute a Globin domain; that stretch reads GLTAHEKQLI…IADALGKGYH (145 aa). The heme b site is built by H63 and H92.

Belongs to the globin family. As to quaternary structure, heterotetramer of two alpha chains and two beta chains. As to expression, red blood cells.

Involved in oxygen transport from the lung to the various peripheral tissues. This is Hemoglobin subunit beta-2 (hbb2) from Xenopus borealis (Kenyan clawed frog).